The primary structure comprises 191 residues: UPF0312 protein Sden_2128 (191 aa).

Residues 1–22 (MKKHLLASLLGASLLLPTAVNA) form the signal peptide.

The protein belongs to the UPF0312 family. Type 1 subfamily.

It localises to the periplasm. The polypeptide is UPF0312 protein Sden_2128 (Shewanella denitrificans (strain OS217 / ATCC BAA-1090 / DSM 15013)).